Consider the following 156-residue polypeptide: uncharacterized protein (156 aa).

5 helical membrane passes run 7–29 (AQISVVLSTIIIMTYAFLSSYFL), 42–64 (YFALSNLLSLSLPFVCAWFPYLF), 69–88 (AVTGSALSAFGLFLFFAITS), 98–120 (AAIWVIYFFWLIGAALAGVYPAL), and 133–155 (ALVLSALFTVVVSFIIGFLISRI).

The protein resides in the cell membrane. This is an uncharacterized protein from Pasteurella multocida (strain Pm70).